Reading from the N-terminus, the 159-residue chain is Endoribonuclease YbeY (159 aa).

Zn(2+) is bound by residues His125, His129, and His135.

This sequence belongs to the endoribonuclease YbeY family. Requires Zn(2+) as cofactor.

It localises to the cytoplasm. In terms of biological role, single strand-specific metallo-endoribonuclease involved in late-stage 70S ribosome quality control and in maturation of the 3' terminus of the 16S rRNA. The protein is Endoribonuclease YbeY of Ligilactobacillus salivarius (strain UCC118) (Lactobacillus salivarius).